The following is a 492-amino-acid chain: GlcNAc-binding protein A (492 aa).

The first 23 residues, methionine 1–alanine 23, serve as a signal peptide directing secretion. Residues histidine 24–phenylalanine 204 form the Chitin-binding type-4 domain. A Chitin-binding type-3 domain is found at alanine 443 to tryptophan 484.

The protein belongs to the GbpA family.

It localises to the secreted. Its function is as follows. Probably interacts with GlcNAc residues. May promote attachment to both epithelial cell surfaces and chitin. This is GlcNAc-binding protein A from Aliivibrio fischeri (strain ATCC 700601 / ES114) (Vibrio fischeri).